Consider the following 281-residue polypeptide: Shikimate dehydrogenase (NADP(+)) (281 aa).

Shikimate-binding positions include 15 to 17 (SKS) and Thr-62. Residue Lys-66 is the Proton acceptor of the active site. Residues Asn-87 and Asp-102 each contribute to the shikimate site. NADP(+) is bound by residues 127-131 (GAGGS), 151-156 (NRTPER), and Leu-217. Shikimate is bound at residue Tyr-219. Position 241 (Gly-241) interacts with NADP(+).

Belongs to the shikimate dehydrogenase family. In terms of assembly, homodimer.

The enzyme catalyses shikimate + NADP(+) = 3-dehydroshikimate + NADPH + H(+). The protein operates within metabolic intermediate biosynthesis; chorismate biosynthesis; chorismate from D-erythrose 4-phosphate and phosphoenolpyruvate: step 4/7. In terms of biological role, involved in the biosynthesis of the chorismate, which leads to the biosynthesis of aromatic amino acids. Catalyzes the reversible NADPH linked reduction of 3-dehydroshikimate (DHSA) to yield shikimate (SA). This chain is Shikimate dehydrogenase (NADP(+)), found in Stenotrophomonas maltophilia (strain K279a).